The following is a 238-amino-acid chain: UDP-2,3-diacylglucosamine hydrolase (238 aa).

Mn(2+) is bound by residues Asp8, His10, Asp41, Asn78, and His113. 78–79 is a substrate binding site; the sequence is NR. Residues Asp121, Ser159, Asn163, Lys166, and His194 each contribute to the substrate site. Residues His194 and His196 each contribute to the Mn(2+) site.

Belongs to the LpxH family. Requires Mn(2+) as cofactor.

It localises to the cell inner membrane. The enzyme catalyses UDP-2-N,3-O-bis[(3R)-3-hydroxytetradecanoyl]-alpha-D-glucosamine + H2O = 2-N,3-O-bis[(3R)-3-hydroxytetradecanoyl]-alpha-D-glucosaminyl 1-phosphate + UMP + 2 H(+). It participates in glycolipid biosynthesis; lipid IV(A) biosynthesis; lipid IV(A) from (3R)-3-hydroxytetradecanoyl-[acyl-carrier-protein] and UDP-N-acetyl-alpha-D-glucosamine: step 4/6. Functionally, hydrolyzes the pyrophosphate bond of UDP-2,3-diacylglucosamine to yield 2,3-diacylglucosamine 1-phosphate (lipid X) and UMP by catalyzing the attack of water at the alpha-P atom. Involved in the biosynthesis of lipid A, a phosphorylated glycolipid that anchors the lipopolysaccharide to the outer membrane of the cell. The polypeptide is UDP-2,3-diacylglucosamine hydrolase (Shewanella piezotolerans (strain WP3 / JCM 13877)).